Reading from the N-terminus, the 411-residue chain is Prophage integrase IntR (411 aa).

One can recognise a Core-binding (CB) domain in the interval 81–176 (KTFGELCDIW…LLCSLLRFAY (96 aa)). In terms of domain architecture, Tyr recombinase spans 197–404 (IKPDPLSKTE…IDDMNDEQIA (208 aa)). Active-site residues include arginine 231, lysine 266, arginine 358, and histidine 381. The active-site O-(3'-phospho-DNA)-tyrosine intermediate is the tyrosine 391.

This sequence belongs to the 'phage' integrase family.

In terms of biological role, integrase is necessary for integration of the phage into the host genome by site-specific recombination. In conjunction with excisionase, integrase is also necessary for excision of the prophage from the host genome. The sequence is that of Prophage integrase IntR (intR) from Escherichia coli (strain K12).